A 263-amino-acid chain; its full sequence is MAFGDDDILSIPFKYFVICIGGLPSSALLICVILSLLLHFDQATSTHCEVANWLPSISAAVSTYTPEKYIWRILIGLHIGPRLVVAIAFRNFLLGSPLRPLTGHKRLRFLCNLACFLNLLENFFLLALTSISSSEDHSLHAKCFGGFAICSIIYMLLSTWLFNETGRRTATNLGQRSHEYKILGAAIFVLCFFLGAYLYWRHNTYCEPGIYTLFALVEYSAVLSNIFFHCTLYYDFHGKNIVLTSSFGGGHYNLLPTQIDKDT.

6 consecutive transmembrane segments (helical) span residues 16–36 (FVIC…ILSL), 69–89 (YIWR…AIAF), 109–129 (FLCN…LALT), 143–163 (CFGG…WLFN), 180–200 (YKIL…YLYW), and 208–228 (PGIY…NIFF).

The protein belongs to the PGAP2 family.

Its subcellular location is the golgi apparatus membrane. It is found in the endoplasmic reticulum membrane. Functionally, involved in the lipid remodeling steps of GPI-anchor maturation. Required for stable expression of GPI-anchored proteins at the cell surface. The polypeptide is Post-GPI attachment to proteins factor 2 (Caenorhabditis elegans).